We begin with the raw amino-acid sequence, 195 residues long: 4'-phosphopantetheinyl transferase AcpT (195 aa).

This sequence belongs to the P-Pant transferase superfamily. Gsp/Sfp/HetI/AcpT family.

The catalysed reaction is apo-[ACP] + CoA = holo-[ACP] + adenosine 3',5'-bisphosphate + H(+). Functionally, may be involved in an alternative pathway for phosphopantetheinyl transfer and holo-ACP synthesis in E.coli. The native apo-protein substrate is unknown. Is able to functionally replace AcpS in vivo but only when expressed at high levels. The sequence is that of 4'-phosphopantetheinyl transferase AcpT from Escherichia coli (strain K12).